Here is a 316-residue protein sequence, read N- to C-terminus: Protein U25 (316 aa).

It belongs to the herpesviridae US22 family.

The chain is Protein U25 (U25) from Human herpesvirus 6B (HHV-6 variant B).